The following is a 210-amino-acid chain: Thiamine-phosphate synthase (210 aa).

4-amino-2-methyl-5-(diphosphooxymethyl)pyrimidine-binding positions include 36-40 (QLREK) and asparagine 68. Aspartate 69 and aspartate 88 together coordinate Mg(2+). 4-amino-2-methyl-5-(diphosphooxymethyl)pyrimidine is bound at residue serine 107. 133–135 (TGS) contributes to the 2-[(2R,5Z)-2-carboxy-4-methylthiazol-5(2H)-ylidene]ethyl phosphate binding site. Lysine 136 provides a ligand contact to 4-amino-2-methyl-5-(diphosphooxymethyl)pyrimidine. 2-[(2R,5Z)-2-carboxy-4-methylthiazol-5(2H)-ylidene]ethyl phosphate contacts are provided by residues glycine 164 and 184-185 (IS).

Belongs to the thiamine-phosphate synthase family. The cofactor is Mg(2+).

The enzyme catalyses 2-[(2R,5Z)-2-carboxy-4-methylthiazol-5(2H)-ylidene]ethyl phosphate + 4-amino-2-methyl-5-(diphosphooxymethyl)pyrimidine + 2 H(+) = thiamine phosphate + CO2 + diphosphate. The catalysed reaction is 2-(2-carboxy-4-methylthiazol-5-yl)ethyl phosphate + 4-amino-2-methyl-5-(diphosphooxymethyl)pyrimidine + 2 H(+) = thiamine phosphate + CO2 + diphosphate. It catalyses the reaction 4-methyl-5-(2-phosphooxyethyl)-thiazole + 4-amino-2-methyl-5-(diphosphooxymethyl)pyrimidine + H(+) = thiamine phosphate + diphosphate. Its pathway is cofactor biosynthesis; thiamine diphosphate biosynthesis; thiamine phosphate from 4-amino-2-methyl-5-diphosphomethylpyrimidine and 4-methyl-5-(2-phosphoethyl)-thiazole: step 1/1. In terms of biological role, condenses 4-methyl-5-(beta-hydroxyethyl)thiazole monophosphate (THZ-P) and 2-methyl-4-amino-5-hydroxymethyl pyrimidine pyrophosphate (HMP-PP) to form thiamine monophosphate (TMP). The protein is Thiamine-phosphate synthase of Moorella thermoacetica (strain ATCC 39073 / JCM 9320).